A 154-amino-acid polypeptide reads, in one-letter code: Probable archaeosortase D (154 aa).

Transmembrane regions (helical) follow at residues 6–26 (AIYI…LKML), 57–77 (IIEI…LGYI), 91–111 (YSVF…ILII), and 125–145 (VISF…IYLL). Catalysis depends on Cys64, which acts as the Acyl-thioester intermediate. The active-site Proton donor is Arg106.

This sequence belongs to the exosortase/archaeosortase family. Archaeosortase D subfamily.

The protein resides in the cell membrane. Transpeptidase that recognizes and modifies its substrate by proteolytic cleavage of a sorting signal. Following cleavage, a covalent intermediate is formed via a thioester bond between the archaeosortase and its substrate, which is then transferred and covalently attached to the cell membrane. The chain is Probable archaeosortase D from Methanocaldococcus jannaschii (strain ATCC 43067 / DSM 2661 / JAL-1 / JCM 10045 / NBRC 100440) (Methanococcus jannaschii).